The chain runs to 245 residues: 1-(5-phosphoribosyl)-5-[(5-phosphoribosylamino)methylideneamino] imidazole-4-carboxamide isomerase (245 aa).

Catalysis depends on Asp-8, which acts as the Proton acceptor. Asp-130 (proton donor) is an active-site residue.

It belongs to the HisA/HisF family.

Its subcellular location is the cytoplasm. The enzyme catalyses 1-(5-phospho-beta-D-ribosyl)-5-[(5-phospho-beta-D-ribosylamino)methylideneamino]imidazole-4-carboxamide = 5-[(5-phospho-1-deoxy-D-ribulos-1-ylimino)methylamino]-1-(5-phospho-beta-D-ribosyl)imidazole-4-carboxamide. The protein operates within amino-acid biosynthesis; L-histidine biosynthesis; L-histidine from 5-phospho-alpha-D-ribose 1-diphosphate: step 4/9. The sequence is that of 1-(5-phosphoribosyl)-5-[(5-phosphoribosylamino)methylideneamino] imidazole-4-carboxamide isomerase from Pseudomonas entomophila (strain L48).